The chain runs to 747 residues: MSKLKSSESVRVVVRCRPMNGKEKAASYDKVVDVDVKLGQVSVKNPKGTSHEMPKTFTFDAVYDWNAKQFELYDETFRPLVDSVLQGFNGTIFAYGQTGTGKTYTMEGVRGDPEKRGVIPNSFDHIFTHISRSQNQQYLVRASYLEIYQEEIRDLLSKDQTKRLELKERPDTGVYVKDLSSFVTKSVKEIEHVMNVGNQNRSVGATNMNEHSSRSHAIFVITIECSEVGLDGENHIRVGKLNLVDLAGSERQAKTGAQGERLKEATKINLSLSALGNVISALVDGKSTHIPYRDSKLTRLLQDSLGGNAKTVMVANVGPASYNVEETLTTLRYANRAKNIKNKPRVNEDPKDALLREFQEEIARLKAQLEKRSIGRRKRREKRREGGGSGGGGEEEEEEGEEGEEDGDDKDDYWREQQEKLEIEKRAIVEDHSLVAEEKMRLLKEKEKKMEDLRREKDAAEMLGAKIKAMESKLLVGGKNIVDHTNEQQKILEQKRQEIAEQKRREREIQQQMESRDEETLELKETYTSLQQEVDIKTKKLKKLFSKLQAVKAEIHDLQEEHIKERQELEQTQNELTRELKLKHLIIENFIPLEEKNKIMNRSFFDDEEDHWKLHPITRLENQQMMKRPVSAVGYKRPLSQHARMSMMIRPEPRYRAENIMLLELDMPSRTTRDYEGPAISPKVQAALDAALQDEDEIQVDASSFESTASRKPKARPKSGRKSGSSSSSSGNPASQFYPQSRGLVPK.

Position 1 is an N-acetylmethionine (Met1). At Ser2 the chain carries N-acetylserine; in Kinesin-like protein KIF3B, N-terminally processed. A Kinesin motor domain is found at 9 to 340 (SVRVVVRCRP…LRYANRAKNI (332 aa)). ATP is bound at residue 96–103 (GQTGTGKT). Positions 346–579 (VNEDPKDALL…EQTQNELTRE (234 aa)) form a coiled coil. Disordered regions lie at residues 374 to 412 (IGRR…DKDD) and 698 to 747 (IQVD…LVPK). Over residues 393 to 411 (GEEEEEEGEEGEEDGDDKD) the composition is skewed to acidic residues. A globular region spans residues 580–747 (LKLKHLIIEN…YPQSRGLVPK (168 aa)). A compositionally biased stretch (polar residues) spans 701–710 (DASSFESTAS). Basic residues predominate over residues 711–721 (RKPKARPKSGR). The span at 722 to 735 (KSGSSSSSSGNPAS) shows a compositional bias: low complexity.

The protein belongs to the TRAFAC class myosin-kinesin ATPase superfamily. Kinesin family. Kinesin II subfamily. Heterodimer of KIF3A and KIF3B. KIF3A/KIF3B heterodimer interacts with KIFAP3 forming a heterotrimeric (KIF3A/KIF3B/KIFAP3) complex. Interacts with the SMC3 subunit of the cohesin complex. Interacts directly with IFT20. Interacts with FLCN.

It is found in the cytoplasm. It localises to the cytoskeleton. The protein resides in the cell projection. The protein localises to the cilium. Its subcellular location is the dendritic spine. Its function is as follows. Microtubule-based molecular motor that transport intracellular cargos, such as vesicles, organelles and protein complexes. Uses ATP hydrolysis to generate force to bind and move along the microtubule. Plays a role in cilia formation. Involved in photoreceptor integrity and opsin trafficking in rod photoreceptors. Transports vesicles containing N-methyl-D-aspartate (NMDA) receptor subunit GRIN2A into neuronal dendrites. The protein is Kinesin-like protein KIF3B of Mus musculus (Mouse).